Consider the following 390-residue polypeptide: Cyclic amide hydrolase (390 aa).

The RU A stretch occupies residues 1 to 118; the sequence is MPNPEASLSP…TVVTQEWVAD (118 aa). Substrate-binding positions include R66 and 97–98; that span reads SG. The tract at residues 127–268 is RU B; that stretch reads GLVVGRGHTE…GEVLLLANSA (142 aa). K177 is a catalytic residue. Residues N213, 251–252, K346, and 365–366 contribute to the substrate site; these read SS and SG. Residue S251 is the Nucleophile of the active site. An RU C region spans residues 274–390; that stretch reads LRIGHGITRD…VAAVVRRLPA (117 aa).

Belongs to the cyclic amide hydrolase (CyAH) family. In terms of assembly, homotetramer; disulfide-linked. The disulfide forms between 2 monomers in the tetramer, such that each tetramer contains 2 sets of vicinal disulfides.

In terms of biological role, cyclic amide hydrolase of unknown substrate specificity. Catalyzes the hydrolytic ring-opening of a cyclic amide. Does not act on cyanuric acid nor barbituric acid. This chain is Cyclic amide hydrolase, found in Pseudofrankia inefficax (strain DSM 45817 / CECT 9037 / DDB 130130 / EuI1c) (Frankia inefficax).